The sequence spans 308 residues: Methionyl-tRNA formyltransferase (308 aa).

(6S)-5,6,7,8-tetrahydrofolate is bound at residue 109–112; that stretch reads SLLP.

Belongs to the Fmt family.

It catalyses the reaction L-methionyl-tRNA(fMet) + (6R)-10-formyltetrahydrofolate = N-formyl-L-methionyl-tRNA(fMet) + (6S)-5,6,7,8-tetrahydrofolate + H(+). Its function is as follows. Attaches a formyl group to the free amino group of methionyl-tRNA(fMet). The formyl group appears to play a dual role in the initiator identity of N-formylmethionyl-tRNA by promoting its recognition by IF2 and preventing the misappropriation of this tRNA by the elongation apparatus. The protein is Methionyl-tRNA formyltransferase of Clostridium beijerinckii (strain ATCC 51743 / NCIMB 8052) (Clostridium acetobutylicum).